Reading from the N-terminus, the 87-residue chain is Small ribosomal subunit protein bS21 (87 aa).

Residues 47–63 (YEKPSEKRARQKAEAVR) are compositionally biased toward basic and acidic residues. The interval 47-87 (YEKPSEKRARQKAEAVRRARKLARKRAQREGLLPMPKKPGR) is disordered. The segment covering 64–73 (RARKLARKRA) has biased composition (basic residues).

It belongs to the bacterial ribosomal protein bS21 family.

The polypeptide is Small ribosomal subunit protein bS21 (Caulobacter vibrioides (strain ATCC 19089 / CIP 103742 / CB 15) (Caulobacter crescentus)).